The sequence spans 483 residues: ATP synthase subunit beta (483 aa).

162-169 (GGAGVGKT) lines the ATP pocket.

It belongs to the ATPase alpha/beta chains family. F-type ATPases have 2 components, CF(1) - the catalytic core - and CF(0) - the membrane proton channel. CF(1) has five subunits: alpha(3), beta(3), gamma(1), delta(1), epsilon(1). CF(0) has four main subunits: a(1), b(1), b'(1) and c(9-12).

The protein resides in the cellular thylakoid membrane. The catalysed reaction is ATP + H2O + 4 H(+)(in) = ADP + phosphate + 5 H(+)(out). In terms of biological role, produces ATP from ADP in the presence of a proton gradient across the membrane. The catalytic sites are hosted primarily by the beta subunits. This is ATP synthase subunit beta from Prochloron didemni.